The following is a 253-amino-acid chain: Imidazole glycerol phosphate synthase subunit HisF (253 aa).

Catalysis depends on residues aspartate 11 and aspartate 130.

The protein belongs to the HisA/HisF family. In terms of assembly, heterodimer of HisH and HisF.

The protein resides in the cytoplasm. It carries out the reaction 5-[(5-phospho-1-deoxy-D-ribulos-1-ylimino)methylamino]-1-(5-phospho-beta-D-ribosyl)imidazole-4-carboxamide + L-glutamine = D-erythro-1-(imidazol-4-yl)glycerol 3-phosphate + 5-amino-1-(5-phospho-beta-D-ribosyl)imidazole-4-carboxamide + L-glutamate + H(+). Its pathway is amino-acid biosynthesis; L-histidine biosynthesis; L-histidine from 5-phospho-alpha-D-ribose 1-diphosphate: step 5/9. In terms of biological role, IGPS catalyzes the conversion of PRFAR and glutamine to IGP, AICAR and glutamate. The HisF subunit catalyzes the cyclization activity that produces IGP and AICAR from PRFAR using the ammonia provided by the HisH subunit. In Thermoanaerobacter sp. (strain X514), this protein is Imidazole glycerol phosphate synthase subunit HisF.